We begin with the raw amino-acid sequence, 239 residues long: Tetratricopeptide repeat protein 9B (239 aa).

2 disordered regions span residues 1–57 (MQRG…LGAA) and 99–126 (QGAR…SEEQ). Phosphoserine occurs at positions 7 and 27. The segment covering 16 to 31 (PEPPPRPPPALSPPGS) has biased composition (pro residues). Residues 65–99 (AVAFKAEGQRCYREKKFREAIGKYHRALLQLKAAQ) form a TPR 1 repeat. Over residues 106–116 (LPAPAPGPTSS) the composition is skewed to pro residues. The stretch at 171-204 (FKATYRAGIAFYHLGDYARALRYLQEARSREPTD) is one TPR 2 repeat.

This sequence belongs to the TTC9 family.

This is Tetratricopeptide repeat protein 9B (TTC9B) from Homo sapiens (Human).